We begin with the raw amino-acid sequence, 481 residues long: Dual specificity protein kinase CLK4 (481 aa).

Disordered stretches follow at residues 1–47 and 102–143; these read MRHS…KPHH and SKSS…EDDE. Positions 8-19 are enriched in basic and acidic residues; it reads HCPDWDSRESWG. 2 stretches are compositionally biased toward basic residues: residues 106 to 119 and 126 to 136; these read VRSR…KRNR and SHSKSHRRKRS. 2 positions are modified to phosphoserine: serine 136 and serine 138. Residues 159-475 enclose the Protein kinase domain; that stretch reads YEIVDTLGEG…LDEALQHPFF (317 aa). ATP contacts are provided by residues 165 to 173 and lysine 189; that span reads LGEGAFGKV. Residue aspartate 286 is the Proton acceptor of the active site.

Belongs to the protein kinase superfamily. CMGC Ser/Thr protein kinase family. Lammer subfamily. Interacts with UBL5. Autophosphorylates on all three types of residues. In terms of tissue distribution, expressed in the hippocampus, the cerebellum and the olfactory bulb.

Its subcellular location is the nucleus. The catalysed reaction is L-seryl-[protein] + ATP = O-phospho-L-seryl-[protein] + ADP + H(+). The enzyme catalyses L-threonyl-[protein] + ATP = O-phospho-L-threonyl-[protein] + ADP + H(+). It carries out the reaction L-tyrosyl-[protein] + ATP = O-phospho-L-tyrosyl-[protein] + ADP + H(+). With respect to regulation, TG003 inhibits its kinase activity and affects the regulation of alternative splicing mediated by phosphorylation of SR proteins. Functionally, dual specificity kinase acting on both serine/threonine and tyrosine-containing substrates. Phosphorylates serine- and arginine-rich (SR) proteins of the spliceosomal complex and may be a constituent of a network of regulatory mechanisms that enable SR proteins to control RNA splicing. Phosphorylates SRSF1 and SRSF3. Required for the regulation of alternative splicing of MAPT/TAU. Regulates the alternative splicing of tissue factor (F3) pre-mRNA in endothelial cells. The polypeptide is Dual specificity protein kinase CLK4 (Clk4) (Mus musculus (Mouse)).